Consider the following 508-residue polypeptide: Flagellin (508 aa).

The protein belongs to the bacterial flagellin family.

Its subcellular location is the secreted. It localises to the bacterial flagellum. Flagellin is the subunit protein which polymerizes to form the filaments of bacterial flagella. In Salmonella oranienberg, this protein is Flagellin (fliC).